A 104-amino-acid chain; its full sequence is ATP-dependent Clp protease adapter protein ClpS (104 aa).

The interval 1–20 (MAEETPTRSPGGAAVLDKAP) is disordered.

The protein belongs to the ClpS family. In terms of assembly, binds to the N-terminal domain of the chaperone ClpA.

Involved in the modulation of the specificity of the ClpAP-mediated ATP-dependent protein degradation. The polypeptide is ATP-dependent Clp protease adapter protein ClpS (Synechococcus sp. (strain CC9902)).